The sequence spans 736 residues: Phosphoribosylformylglycinamidine synthase subunit PurL (736 aa).

Residue His48 is part of the active site. ATP-binding residues include Tyr51 and Lys90. Glu92 contributes to the Mg(2+) binding site. Substrate is bound by residues 93 to 96 (SHNH) and Arg115. His94 (proton acceptor) is an active-site residue. Mg(2+) is bound at residue Asp116. A substrate-binding site is contributed by Gln239. Mg(2+) is bound at residue Asp267. 311-313 (ESQ) contributes to the substrate binding site. 2 residues coordinate ATP: Asp492 and Gly529. Asn530 contacts Mg(2+). Ser532 is a substrate binding site.

The protein belongs to the FGAMS family. As to quaternary structure, monomer. Part of the FGAM synthase complex composed of 1 PurL, 1 PurQ and 2 PurS subunits.

The protein localises to the cytoplasm. The catalysed reaction is N(2)-formyl-N(1)-(5-phospho-beta-D-ribosyl)glycinamide + L-glutamine + ATP + H2O = 2-formamido-N(1)-(5-O-phospho-beta-D-ribosyl)acetamidine + L-glutamate + ADP + phosphate + H(+). Its pathway is purine metabolism; IMP biosynthesis via de novo pathway; 5-amino-1-(5-phospho-D-ribosyl)imidazole from N(2)-formyl-N(1)-(5-phospho-D-ribosyl)glycinamide: step 1/2. Functionally, part of the phosphoribosylformylglycinamidine synthase complex involved in the purines biosynthetic pathway. Catalyzes the ATP-dependent conversion of formylglycinamide ribonucleotide (FGAR) and glutamine to yield formylglycinamidine ribonucleotide (FGAM) and glutamate. The FGAM synthase complex is composed of three subunits. PurQ produces an ammonia molecule by converting glutamine to glutamate. PurL transfers the ammonia molecule to FGAR to form FGAM in an ATP-dependent manner. PurS interacts with PurQ and PurL and is thought to assist in the transfer of the ammonia molecule from PurQ to PurL. This is Phosphoribosylformylglycinamidine synthase subunit PurL from Bradyrhizobium sp. (strain ORS 278).